Consider the following 643-residue polypeptide: MVNTLSDVNNTDNYGAGQIQVLEGLEAVRKRPGMYIGSTSERGLHHLVWEIVDNSIDEALAGYASHIEVVIEKDNWIKVTDNGRGIPVDIQEKMGRPAVEVILTVLHAGGKFGGGGYKVSGGLHGVGSSVVNALSQDLEVYVHRNGTIYHQAYKQGVPQFDLKEIGDTDKTGTAIRFKADKEIFTETTVYNYETLQKRIRELAFLNKGIQITLKDEREEEVREDSYHYEGGIKSYVDLLNENKEPLHDEPIYIHQSKDDIEVEIALQYNSGYATNLLTYANNIHTYEGGTHEDGFKRALTRVLNSYGTQSKIIKEDKDRLSGEDTREGLTAVVSIKHGDPQFEGQTKTKLGNSEVRQVVDRLFSEHFERFLYENPSVGRIIVEKGIMASRARVAAKKAREVTRRKSALDVSSLPGKLADCSSKNPEESEIFLVEGDSAGGSTKSGRDSRTQAILPLRGKILNVEKARLDRILNNNEIRQMITAFGTGIGGEFDISKARYHKIVIMTDADVDGAHIRTLLLTFFYRFMRPLIEAGYVYIAQPPLYKLTQGKQKYYVFNDRELDKLKQELNPSPKWSIARYKGLGEMNADQLWETTMNPEHRSMLQVRLEDAIDADQTFEMLMGDVVENRRQFIEDNAVYANLDF.

Residues 428 to 542 (SEIFLVEGDS…AGYVYIAQPP (115 aa)) enclose the Toprim domain. The Mg(2+) site is built by glutamate 434, aspartate 507, and aspartate 509.

This sequence belongs to the type II topoisomerase GyrB family. Heterotetramer, composed of two GyrA and two GyrB chains. In the heterotetramer, GyrA contains the active site tyrosine that forms a transient covalent intermediate with DNA, while GyrB binds cofactors and catalyzes ATP hydrolysis. Mg(2+) is required as a cofactor. The cofactor is Mn(2+). Requires Ca(2+) as cofactor.

The protein localises to the cytoplasm. It catalyses the reaction ATP-dependent breakage, passage and rejoining of double-stranded DNA.. Its function is as follows. A type II topoisomerase that negatively supercoils closed circular double-stranded (ds) DNA in an ATP-dependent manner to modulate DNA topology and maintain chromosomes in an underwound state. Negative supercoiling favors strand separation, and DNA replication, transcription, recombination and repair, all of which involve strand separation. Also able to catalyze the interconversion of other topological isomers of dsDNA rings, including catenanes and knotted rings. Type II topoisomerases break and join 2 DNA strands simultaneously in an ATP-dependent manner. This is DNA gyrase subunit B from Staphylococcus epidermidis (strain ATCC 35984 / DSM 28319 / BCRC 17069 / CCUG 31568 / BM 3577 / RP62A).